A 380-amino-acid chain; its full sequence is Succinyl-diaminopimelate desuccinylase (380 aa).

Residue His69 coordinates Zn(2+). Residue Asp71 is part of the active site. Asp102 serves as a coordination point for Zn(2+). Glu135 serves as the catalytic Proton acceptor. Residues Glu136, Glu164, and His353 each coordinate Zn(2+).

This sequence belongs to the peptidase M20A family. DapE subfamily. As to quaternary structure, homodimer. Zn(2+) is required as a cofactor. Co(2+) serves as cofactor.

It carries out the reaction N-succinyl-(2S,6S)-2,6-diaminopimelate + H2O = (2S,6S)-2,6-diaminopimelate + succinate. Its pathway is amino-acid biosynthesis; L-lysine biosynthesis via DAP pathway; LL-2,6-diaminopimelate from (S)-tetrahydrodipicolinate (succinylase route): step 3/3. Its function is as follows. Catalyzes the hydrolysis of N-succinyl-L,L-diaminopimelic acid (SDAP), forming succinate and LL-2,6-diaminopimelate (DAP), an intermediate involved in the bacterial biosynthesis of lysine and meso-diaminopimelic acid, an essential component of bacterial cell walls. The sequence is that of Succinyl-diaminopimelate desuccinylase from Cereibacter sphaeroides (strain KD131 / KCTC 12085) (Rhodobacter sphaeroides).